We begin with the raw amino-acid sequence, 119 residues long: Ribonuclease P protein component (119 aa).

The protein belongs to the RnpA family. Consists of a catalytic RNA component (M1 or rnpB) and a protein subunit.

It carries out the reaction Endonucleolytic cleavage of RNA, removing 5'-extranucleotides from tRNA precursor.. In terms of biological role, RNaseP catalyzes the removal of the 5'-leader sequence from pre-tRNA to produce the mature 5'-terminus. It can also cleave other RNA substrates such as 4.5S RNA. The protein component plays an auxiliary but essential role in vivo by binding to the 5'-leader sequence and broadening the substrate specificity of the ribozyme. The protein is Ribonuclease P protein component of Proteus mirabilis (strain HI4320).